The primary structure comprises 591 residues: Aspartate--tRNA(Asp/Asn) ligase (591 aa).

Glutamate 176 is a binding site for L-aspartate. An aspartate region spans residues 200 to 203; the sequence is QLFK. L-aspartate is bound at residue arginine 222. Residues 222 to 224 and glutamine 231 contribute to the ATP site; that span reads RDE. L-aspartate is bound at residue histidine 450. Glutamate 484 serves as a coordination point for ATP. Arginine 491 is a binding site for L-aspartate. Residue 536-539 coordinates ATP; sequence GLDR.

This sequence belongs to the class-II aminoacyl-tRNA synthetase family. Type 1 subfamily. Homodimer.

The protein resides in the cytoplasm. The enzyme catalyses tRNA(Asx) + L-aspartate + ATP = L-aspartyl-tRNA(Asx) + AMP + diphosphate. Its function is as follows. Aspartyl-tRNA synthetase with relaxed tRNA specificity since it is able to aspartylate not only its cognate tRNA(Asp) but also tRNA(Asn). Reaction proceeds in two steps: L-aspartate is first activated by ATP to form Asp-AMP and then transferred to the acceptor end of tRNA(Asp/Asn). This Bacillus anthracis (strain CDC 684 / NRRL 3495) protein is Aspartate--tRNA(Asp/Asn) ligase.